We begin with the raw amino-acid sequence, 445 residues long: Fibrinogen gamma chain (445 aa).

Residues 1 to 25 (MNWSLQLRSFILCWALLLLSPTGLA) form the signal peptide. N78 carries N-linked (GlcNAc...) asparagine glycosylation. Residues 170–416 (RIHDTTGKDC…ETTMKIIPFN (247 aa)) enclose the Fibrinogen C-terminal domain. The cysteines at positions 179 and 208 are disulfide-linked. D344, D346, and G350 together coordinate Ca(2+). Residues C352 and C365 are joined by a disulfide bond. The gamma-chain polymerization, binding amino end of another fibrin alpha chain stretch occupies residues 400–422 (TRWYSMKETTMKIIPFNRLSIGD). Q424 is covalently cross-linked (Isoglutamyl lysine isopeptide (Gln-Lys) (interchain with K-432)). Residues 424–445 (QQHHMGGSKQVSVEHEVDVEYP) are disordered. A Phosphoserine modification is found at S431. K432 participates in a covalent cross-link: Isoglutamyl lysine isopeptide (Lys-Gln) (interchain with Q-424). Basic and acidic residues predominate over residues 435–445 (SVEHEVDVEYP).

Heterohexamer; disulfide linked. Contains 2 sets of 3 non-identical chains (alpha, beta and gamma). The 2 heterotrimers are in head to head conformation with the N-termini in a small central domain. Post-translationally, conversion of fibrinogen to fibrin is triggered by thrombin, which cleaves fibrinopeptides A and B from alpha and beta chains, and thus exposes the N-terminal polymerization sites responsible for the formation of the soft clot. The soft clot is converted into the hard clot by factor XIIIA which catalyzes the epsilon-(gamma-glutamyl)lysine cross-linking between gamma chains (stronger) and between alpha chains (weaker) of different monomers.

It localises to the secreted. Together with fibrinogen alpha (FGA) and fibrinogen beta (FGB), polymerizes to form an insoluble fibrin matrix. Has a major function in hemostasis as one of the primary components of blood clots. In addition, functions during the early stages of wound repair to stabilize the lesion and guide cell migration during re-epithelialization. Was originally thought to be essential for platelet aggregation, based on in vitro studies using anticoagulated blood. However, subsequent studies have shown that it is not absolutely required for thrombus formation in vivo. Enhances expression of SELP in activated platelets via an ITGB3-dependent pathway. Maternal fibrinogen is essential for successful pregnancy. Fibrin deposition is also associated with infection, where it protects against IFNG-mediated hemorrhage. May also facilitate the antibacterial immune response via both innate and T-cell mediated pathways. The polypeptide is Fibrinogen gamma chain (Fgg) (Rattus norvegicus (Rat)).